The chain runs to 154 residues: Transcriptional repressor NrdR (154 aa).

A zinc finger spans residues 3–34 (CPFCSAHDTKVIDSRLVAEGDQVRRRRECQAC). The region spanning 49-139 (PRVIKQDGSR…VYRRFQDLNE (91 aa)) is the ATP-cone domain.

The protein belongs to the NrdR family. The cofactor is Zn(2+).

In terms of biological role, negatively regulates transcription of bacterial ribonucleotide reductase nrd genes and operons by binding to NrdR-boxes. This is Transcriptional repressor NrdR from Azotobacter vinelandii (strain DJ / ATCC BAA-1303).